Here is a 538-residue protein sequence, read N- to C-terminus: MSRTKFIFVTGGVSSSLGKGVTVAALGCLLESRGYTVSLQKMDPYINIDPGTMSPYQHGEVYVTADGAETDLDLGYYERFTHSKLTRKNSVSTGQIYNTVIQRERKGDYLGRTVQVVPHITNEIRNRMYIVAREENPDFIIVEIGGTVGDIESIPFLEAIRQMRYEHGSSNVLFVHLTLVPTITAAGEAKTKPTQHSVKELLGLGIQPDILVCRVSQPMTKEMKNKLSLFCNVKEENVISASDISTSIYEIPKMYKEEKLDEVVLKTMGMELRESNFSEWDKMVKGLLTTKQTVQIAVVGKYISLQDAYRSIYESLSHGGIAHDTKVEFIKVDPENLNKDSYVEILKKVHGILVPGGFGDRGIEGKILAIQYARTNGIPFLGICLGMQCAVVEYGRNVLGLKDANSTEIRPDTEHPVISLLEEQNDIEQMGGTMRLGSYPCKVKENTLSYSEYKSILIHERHRHRFEFTNRYRKQYEENGMIIAGTSPDDNLVEIVEIPKHNWFIGVQFHPEFQSKPTLPHPLFAGFIRASVKYSKKG.

An amidoligase domain region spans residues 1 to 270; it reads MSRTKFIFVT…DEVVLKTMGM (270 aa). Position 15 (Ser15) interacts with CTP. Ser15 serves as a coordination point for UTP. 16–21 serves as a coordination point for ATP; it reads SLGKGV. Tyr56 contributes to the L-glutamine binding site. Asp73 serves as a coordination point for ATP. 2 residues coordinate Mg(2+): Asp73 and Glu143. CTP contacts are provided by residues 150–152, 190–195, and Lys226; these read DIE and KTKPTQ. Residues 190–195 and Lys226 contribute to the UTP site; that span reads KTKPTQ. A Glutamine amidotransferase type-1 domain is found at 295 to 537; it reads QIAVVGKYIS…IRASVKYSKK (243 aa). Residue Gly357 participates in L-glutamine binding. Cys384 (nucleophile; for glutamine hydrolysis) is an active-site residue. Residues 385-388, Glu408, and Arg465 each bind L-glutamine; that span reads LGMQ. Catalysis depends on residues His510 and Glu512.

The protein belongs to the CTP synthase family. As to quaternary structure, homotetramer.

It carries out the reaction UTP + L-glutamine + ATP + H2O = CTP + L-glutamate + ADP + phosphate + 2 H(+). The enzyme catalyses L-glutamine + H2O = L-glutamate + NH4(+). It catalyses the reaction UTP + NH4(+) + ATP = CTP + ADP + phosphate + 2 H(+). Its pathway is pyrimidine metabolism; CTP biosynthesis via de novo pathway; CTP from UDP: step 2/2. Allosterically activated by GTP, when glutamine is the substrate; GTP has no effect on the reaction when ammonia is the substrate. The allosteric effector GTP functions by stabilizing the protein conformation that binds the tetrahedral intermediate(s) formed during glutamine hydrolysis. Inhibited by the product CTP, via allosteric rather than competitive inhibition. Functionally, catalyzes the ATP-dependent amination of UTP to CTP with either L-glutamine or ammonia as the source of nitrogen. Regulates intracellular CTP levels through interactions with the four ribonucleotide triphosphates. In Leptospira interrogans serogroup Icterohaemorrhagiae serovar copenhageni (strain Fiocruz L1-130), this protein is CTP synthase.